The chain runs to 264 residues: Exodeoxyribonuclease YycJ (264 aa).

Residues H58, H60, D62, H63, and D145 each coordinate a divalent metal cation.

It belongs to the metallo-beta-lactamase superfamily. Fe(2+) is required as a cofactor. Zn(2+) serves as cofactor. The cofactor is Mn(2+).

Functionally, 5'-&gt;3' double-stranded DNA exonuclease. May play a role in mutation mismatch repair (MMR). Required for accurate coordination of cell division with DNA replication. May play a role in cell wall metabolism. This chain is Exodeoxyribonuclease YycJ, found in Bacillus anthracis.